A 296-amino-acid polypeptide reads, in one-letter code: tRNA dimethylallyltransferase (296 aa).

Position 9–16 (9–16 (GPTAVGKT)) interacts with ATP. 11–16 (TAVGKT) contributes to the substrate binding site. Residues 34–37 (DSRQ) form an interaction with substrate tRNA region.

It belongs to the IPP transferase family. In terms of assembly, monomer. Mg(2+) serves as cofactor.

The enzyme catalyses adenosine(37) in tRNA + dimethylallyl diphosphate = N(6)-dimethylallyladenosine(37) in tRNA + diphosphate. Catalyzes the transfer of a dimethylallyl group onto the adenine at position 37 in tRNAs that read codons beginning with uridine, leading to the formation of N6-(dimethylallyl)adenosine (i(6)A). This is tRNA dimethylallyltransferase from Chloroflexus aggregans (strain MD-66 / DSM 9485).